The sequence spans 268 residues: Cytochrome c oxidase subunit 3 (268 aa).

The next 7 helical transmembrane spans lie at 19-39 (PWPI…VLTM), 49-69 (FDLG…DIVI), 85-105 (LIIG…SVFW), 124-144 (PVGI…IILL), 165-185 (SIIG…FQAF), 202-222 (VFFA…LFLF), and 245-265 (ILYW…VYFW).

This sequence belongs to the cytochrome c oxidase subunit 3 family. In terms of assembly, component of the cytochrome c oxidase (complex IV, CIV), a multisubunit enzyme composed of a catalytic core of 3 subunits and several supernumerary subunits. The complex exists as a monomer or a dimer and forms supercomplexes (SCs) in the inner mitochondrial membrane with ubiquinol-cytochrome c oxidoreductase (cytochrome b-c1 complex, complex III, CIII).

The protein localises to the mitochondrion inner membrane. It carries out the reaction 4 Fe(II)-[cytochrome c] + O2 + 8 H(+)(in) = 4 Fe(III)-[cytochrome c] + 2 H2O + 4 H(+)(out). Component of the cytochrome c oxidase, the last enzyme in the mitochondrial electron transport chain which drives oxidative phosphorylation. The respiratory chain contains 3 multisubunit complexes succinate dehydrogenase (complex II, CII), ubiquinol-cytochrome c oxidoreductase (cytochrome b-c1 complex, complex III, CIII) and cytochrome c oxidase (complex IV, CIV), that cooperate to transfer electrons derived from NADH and succinate to molecular oxygen, creating an electrochemical gradient over the inner membrane that drives transmembrane transport and the ATP synthase. Cytochrome c oxidase is the component of the respiratory chain that catalyzes the reduction of oxygen to water. Electrons originating from reduced cytochrome c in the intermembrane space (IMS) are transferred via the dinuclear copper A center (CU(A)) of subunit 2 and heme A of subunit 1 to the active site in subunit 1, a binuclear center (BNC) formed by heme A3 and copper B (CU(B)). The BNC reduces molecular oxygen to 2 water molecules using 4 electrons from cytochrome c in the IMS and 4 protons from the mitochondrial matrix. This chain is Cytochrome c oxidase subunit 3 (COIII), found in Schizophyllum commune (Split gill fungus).